The primary structure comprises 422 residues: UDP-N-acetylglucosamine 1-carboxyvinyltransferase 2 (422 aa).

22-23 serves as a coordination point for phosphoenolpyruvate; sequence KN. Arg93 contributes to the UDP-N-acetyl-alpha-D-glucosamine binding site. Cys117 (proton donor) is an active-site residue. At Cys117 the chain carries 2-(S-cysteinyl)pyruvic acid O-phosphothioketal. Residues 122 to 126, Asp308, and Ile330 contribute to the UDP-N-acetyl-alpha-D-glucosamine site; that span reads RPVDL.

The protein belongs to the EPSP synthase family. MurA subfamily.

It is found in the cytoplasm. The enzyme catalyses phosphoenolpyruvate + UDP-N-acetyl-alpha-D-glucosamine = UDP-N-acetyl-3-O-(1-carboxyvinyl)-alpha-D-glucosamine + phosphate. The protein operates within cell wall biogenesis; peptidoglycan biosynthesis. Functionally, cell wall formation. Adds enolpyruvyl to UDP-N-acetylglucosamine. This Legionella pneumophila (strain Lens) protein is UDP-N-acetylglucosamine 1-carboxyvinyltransferase 2.